A 205-amino-acid polypeptide reads, in one-letter code: Large ribosomal subunit protein uL4 (205 aa).

Belongs to the universal ribosomal protein uL4 family. Part of the 50S ribosomal subunit.

Its function is as follows. One of the primary rRNA binding proteins, this protein initially binds near the 5'-end of the 23S rRNA. It is important during the early stages of 50S assembly. It makes multiple contacts with different domains of the 23S rRNA in the assembled 50S subunit and ribosome. In terms of biological role, forms part of the polypeptide exit tunnel. This is Large ribosomal subunit protein uL4 from Roseobacter denitrificans (strain ATCC 33942 / OCh 114) (Erythrobacter sp. (strain OCh 114)).